Here is a 145-residue protein sequence, read N- to C-terminus: Superoxide dismutase [Mn/Fe] (145 aa).

Residues His10 and His64 each contribute to the Fe(3+) site. Mn(2+) is bound by residues His10 and His64.

The protein belongs to the iron/manganese superoxide dismutase family. Mn(2+) serves as cofactor. The cofactor is Fe(3+).

It carries out the reaction 2 superoxide + 2 H(+) = H2O2 + O2. In terms of biological role, destroys superoxide anion radicals which are normally produced within the cells and which are toxic to biological systems. Catalyzes the dismutation of superoxide anion radicals into O2 and H2O2 by successive reduction and oxidation of the transition metal ion at the active site. This is Superoxide dismutase [Mn/Fe] (sodA) from Streptococcus alactolyticus.